The sequence spans 31 residues: Kalata-B9 (31 aa).

A cross-link (cyclopeptide (Gly-Asp)) is located at residues 1–31 (GSVFNCGETCVLGTCYTPGCTCNTYRVCTKD). Intrachain disulfides connect Cys-6-Cys-20, Cys-10-Cys-22, and Cys-15-Cys-28.

It belongs to the cyclotide family. Bracelet subfamily. In terms of processing, this peptide occurs in both cyclic and linear forms.

In terms of biological role, probably participates in a plant defense mechanism. The polypeptide is Kalata-B9 (Oldenlandia affinis).